The following is a 131-amino-acid chain: Methylglyoxal synthase (131 aa).

Residues 1–131 (MKIALIAHDK…GDLDYRKLRK (131 aa)) form the MGS-like domain. Residues H8, K12, 34 to 37 (TGTT), and 54 to 55 (SG) each bind substrate. D60 (proton donor/acceptor) is an active-site residue. Residue H87 participates in substrate binding.

It belongs to the methylglyoxal synthase family.

It carries out the reaction dihydroxyacetone phosphate = methylglyoxal + phosphate. Its function is as follows. Catalyzes the formation of methylglyoxal from dihydroxyacetone phosphate. In Bacillus mycoides (strain KBAB4) (Bacillus weihenstephanensis), this protein is Methylglyoxal synthase.